Here is a 73-residue protein sequence, read N- to C-terminus: UPF0154 protein BcerKBAB4_3367 (73 aa).

A helical membrane pass occupies residues W4 to I24.

This sequence belongs to the UPF0154 family.

It is found in the cell membrane. The polypeptide is UPF0154 protein BcerKBAB4_3367 (Bacillus mycoides (strain KBAB4) (Bacillus weihenstephanensis)).